Consider the following 239-residue polypeptide: DNA repair protein RecO (239 aa).

Belongs to the RecO family.

Its function is as follows. Involved in DNA repair and RecF pathway recombination. The polypeptide is DNA repair protein RecO (Stenotrophomonas maltophilia (strain R551-3)).